We begin with the raw amino-acid sequence, 514 residues long: Citrate synthase 2, peroxisomal (514 aa).

Catalysis depends on residues H324, H363, and D419.

This sequence belongs to the citrate synthase family. In terms of tissue distribution, widely expressed. Expressed throughout the shoot. Expressed in flower, silique, stem, cauline leaf, young leaf, mature leaf and senescent leaf.

It localises to the peroxisome. The catalysed reaction is oxaloacetate + acetyl-CoA + H2O = citrate + CoA + H(+). The protein operates within carbohydrate metabolism; tricarboxylic acid cycle; isocitrate from oxaloacetate: step 1/2. Functionally, peroxisomal citrate synthase required for the fatty acid respiration in seedlings, citrate being exported from peroxisomes into mitochondria during respiration of triacylglycerol (TAG). Indeed, complete respiration requires the transfer of carbon in the form of citrate from the peroxisome to the mitochondria. This is Citrate synthase 2, peroxisomal (CSY2) from Arabidopsis thaliana (Mouse-ear cress).